Reading from the N-terminus, the 474-residue chain is 6-phospho-beta-galactosidase (474 aa).

D-galactose 6-phosphate-binding residues include Gln-19, His-116, Asn-159, Glu-160, and Asn-297. Glu-160 (proton donor) is an active-site residue. The active-site Nucleophile is Glu-375. D-galactose 6-phosphate contacts are provided by Ser-433, Trp-434, Lys-440, and Tyr-442.

It belongs to the glycosyl hydrolase 1 family.

It catalyses the reaction a 6-phospho-beta-D-galactoside + H2O = D-galactose 6-phosphate + an alcohol. The protein operates within carbohydrate metabolism; lactose degradation; D-galactose 6-phosphate and beta-D-glucose from lactose 6-phosphate: step 1/1. This Lacticaseibacillus casei (strain BL23) (Lactobacillus casei) protein is 6-phospho-beta-galactosidase.